Here is a 307-residue protein sequence, read N- to C-terminus: uncharacterized protein (307 aa).

The next 8 membrane-spanning stretches (helical) occupy residues 1–21 (MLIL…MNML), 52–72 (IVFT…IGFV), 99–119 (FIAI…LLFF), 133–153 (FLGL…AGPL), 174–194 (LLIG…IGIL), 208–228 (AMSV…MAAV), 242–262 (VVFN…ATGF), and 277–297 (FSLL…NLFY).

Its subcellular location is the cell membrane. This is an uncharacterized protein from Bacillus subtilis (strain 168).